A 574-amino-acid polypeptide reads, in one-letter code: Sulfate adenylyltransferase (574 aa).

The tract at residues M1–Y169 is N-terminal. The tract at residues D170–S394 is catalytic. Q197 contributes to the sulfate binding site. ATP-binding positions include Q197–N200 and G291–H294. Residues T198, R199, and N200 contribute to the active site. R199 serves as a coordination point for sulfate. A295 is a binding site for sulfate. V333 lines the ATP pocket. Positions Q395 to L574 are allosteric regulation domain; adenylyl-sulfate kinase-like. Residues D434–R437, R451, I477–A478, and R516 contribute to the 3'-phosphoadenylyl sulfate site.

In the N-terminal section; belongs to the sulfate adenylyltransferase family. The protein in the C-terminal section; belongs to the APS kinase family. As to quaternary structure, homohexamer. Dimer of trimers.

Its subcellular location is the cytoplasm. It carries out the reaction sulfate + ATP + H(+) = adenosine 5'-phosphosulfate + diphosphate. Its pathway is sulfur metabolism; hydrogen sulfide biosynthesis; sulfite from sulfate: step 1/3. Its activity is regulated as follows. Allosterically inhibited by 3'-phosphoadenosine 5'-phosphosulfate (PAPS). Catalyzes the first intracellular reaction of sulfate assimilation, forming adenosine-5'-phosphosulfate (APS) from inorganic sulfate and ATP. Plays an important role in sulfate activation as a component of the biosynthesis pathway of sulfur-containing amino acids. This chain is Sulfate adenylyltransferase, found in Aspergillus niger.